We begin with the raw amino-acid sequence, 138 residues long: Small ribosomal subunit protein uS11c (138 aa).

Residues 1–23 (MAKTIPRIGSRKNGRIGSRKNTR) are disordered. Over residues 9-23 (GSRKNGRIGSRKNTR) the composition is skewed to basic residues.

This sequence belongs to the universal ribosomal protein uS11 family. In terms of assembly, part of the 30S ribosomal subunit.

It is found in the plastid. Its subcellular location is the chloroplast. The sequence is that of Small ribosomal subunit protein uS11c from Daucus carota (Wild carrot).